Reading from the N-terminus, the 91-residue chain is Large ribosomal subunit protein eL43 (91 aa).

The C4-type zinc-finger motif lies at 39-60 (CPFCGKDAMRRGAVGIWNCSKC).

This sequence belongs to the eukaryotic ribosomal protein eL43 family.

This is Large ribosomal subunit protein eL43 (rpl-37a) from Ostertagia ostertagi (Brown stomach worm).